The primary structure comprises 1094 residues: Probable arabinosyltransferase C (1094 aa).

A run of 13 helical transmembrane segments spans residues 28-50 (IARY…TPLL), 232-251 (AAMI…LHIL), 264-286 (PARW…WWHF), 341-360 (SIWM…WVIS), 373-392 (TSRA…WLPL), 431-453 (IGAL…LVAI), 466-488 (RFGV…IPIF), 530-552 (SIAR…AMSL), 565-582 (SRRI…MMFT), 586-608 (WTHH…AVAV), 620-642 (TVFA…GWWY), 657-679 (WRWS…AAWF), and 700-722 (LAGI…EVVS). A compositionally biased stretch (low complexity) spans 817 to 831 (GSEPGTEGGTTAAPG). Positions 817-836 (GSEPGTEGGTTAAPGINGSR) are disordered.

It belongs to the emb family.

The protein resides in the cell membrane. Its function is as follows. Arabinosyl transferase responsible for the polymerization of arabinose into the arabinan of arabinogalactan. The sequence is that of Probable arabinosyltransferase C (embC) from Mycobacterium bovis (strain ATCC BAA-935 / AF2122/97).